The primary structure comprises 561 residues: Putative pectinesterase/pectinesterase inhibitor 24 (561 aa).

Residues 26-46 form a helical membrane-spanning segment; sequence IAIIAVSLVILAGIVIGAVFG. The pectinesterase inhibitor 24 stretch occupies residues 64 to 211; that stretch reads DSISVSVKAV…TELTSNALAI (148 aa). N-linked (GlcNAc...) asparagine glycans are attached at residues Asn92, Asn130, Asn148, and Asn200. Positions 255-548 are pectinesterase 24; it reads DIVVAKDGSG…TVKPFIDGGR (294 aa). Substrate is bound by residues Thr330 and Gln360. Residue Asp383 is the Proton donor; for pectinesterase activity of the active site. Cys397 and Cys417 are oxidised to a cystine. Catalysis depends on Asp404, which acts as the Nucleophile; for pectinesterase activity. Arg468 and Trp470 together coordinate substrate. An N-linked (GlcNAc...) asparagine glycan is attached at Asn472.

The protein in the N-terminal section; belongs to the PMEI family. It in the C-terminal section; belongs to the pectinesterase family.

Its subcellular location is the membrane. It carries out the reaction [(1-&gt;4)-alpha-D-galacturonosyl methyl ester](n) + n H2O = [(1-&gt;4)-alpha-D-galacturonosyl](n) + n methanol + n H(+). It functions in the pathway glycan metabolism; pectin degradation; 2-dehydro-3-deoxy-D-gluconate from pectin: step 1/5. Functionally, acts in the modification of cell walls via demethylesterification of cell wall pectin. The chain is Putative pectinesterase/pectinesterase inhibitor 24 (PME24) from Arabidopsis thaliana (Mouse-ear cress).